A 122-amino-acid chain; its full sequence is Large ribosomal subunit protein bL12 (122 aa).

The protein belongs to the bacterial ribosomal protein bL12 family. As to quaternary structure, homodimer. Part of the ribosomal stalk of the 50S ribosomal subunit. Forms a multimeric L10(L12)X complex, where L10 forms an elongated spine to which 2 to 4 L12 dimers bind in a sequential fashion. Binds GTP-bound translation factors.

Functionally, forms part of the ribosomal stalk which helps the ribosome interact with GTP-bound translation factors. Is thus essential for accurate translation. The polypeptide is Large ribosomal subunit protein bL12 (Deinococcus radiodurans (strain ATCC 13939 / DSM 20539 / JCM 16871 / CCUG 27074 / LMG 4051 / NBRC 15346 / NCIMB 9279 / VKM B-1422 / R1)).